A 277-amino-acid chain; its full sequence is Adenylate kinase (277 aa).

Residue 72-77 (GAGKGT) participates in ATP binding. The interval 92 to 121 (ATGDMLRSQVAKQTALGVQAKKIMDQGGLV) is NMP. Residues Thr-93, Arg-98, 119-121 (GLV), 148-151 (GFPR), and Gln-155 contribute to the AMP site. The LID stretch occupies residues 189-226 (GRLVHPASGRSYHKLFNPPKVAMTDDVTGDPLVQRSDD). ATP-binding positions include Arg-190 and 199–200 (SY). Positions 223 and 234 each coordinate AMP. ATP is bound at residue Gln-262.

This sequence belongs to the adenylate kinase family. AK2 subfamily. Monomer.

It localises to the cytoplasm. The protein localises to the cytosol. Its subcellular location is the mitochondrion intermembrane space. It catalyses the reaction AMP + ATP = 2 ADP. Its function is as follows. Catalyzes the reversible transfer of the terminal phosphate group between ATP and AMP. Plays an important role in cellular energy homeostasis and in adenine nucleotide metabolism. Adenylate kinase activity is critical for regulation of the phosphate utilization and the AMP de novo biosynthesis pathways. This Eremothecium gossypii (strain ATCC 10895 / CBS 109.51 / FGSC 9923 / NRRL Y-1056) (Yeast) protein is Adenylate kinase.